A 250-amino-acid chain; its full sequence is Ubiquinone/menaquinone biosynthesis C-methyltransferase UbiE (250 aa).

S-adenosyl-L-methionine-binding positions include Thr-73, Asp-94, 122–123, and Ser-139; that span reads NA.

It belongs to the class I-like SAM-binding methyltransferase superfamily. MenG/UbiE family.

The enzyme catalyses a 2-demethylmenaquinol + S-adenosyl-L-methionine = a menaquinol + S-adenosyl-L-homocysteine + H(+). The catalysed reaction is a 2-methoxy-6-(all-trans-polyprenyl)benzene-1,4-diol + S-adenosyl-L-methionine = a 5-methoxy-2-methyl-3-(all-trans-polyprenyl)benzene-1,4-diol + S-adenosyl-L-homocysteine + H(+). It functions in the pathway quinol/quinone metabolism; menaquinone biosynthesis; menaquinol from 1,4-dihydroxy-2-naphthoate: step 2/2. It participates in cofactor biosynthesis; ubiquinone biosynthesis. Its function is as follows. Methyltransferase required for the conversion of demethylmenaquinol (DMKH2) to menaquinol (MKH2) and the conversion of 2-polyprenyl-6-methoxy-1,4-benzoquinol (DDMQH2) to 2-polyprenyl-3-methyl-6-methoxy-1,4-benzoquinol (DMQH2). The chain is Ubiquinone/menaquinone biosynthesis C-methyltransferase UbiE from Francisella tularensis subsp. novicida (strain U112).